Reading from the N-terminus, the 181-residue chain is Translation initiation factor IF-3 (181 aa).

The protein belongs to the IF-3 family. Monomer.

The protein resides in the cytoplasm. IF-3 binds to the 30S ribosomal subunit and shifts the equilibrium between 70S ribosomes and their 50S and 30S subunits in favor of the free subunits, thus enhancing the availability of 30S subunits on which protein synthesis initiation begins. This chain is Translation initiation factor IF-3, found in Cereibacter sphaeroides (strain ATCC 17023 / DSM 158 / JCM 6121 / CCUG 31486 / LMG 2827 / NBRC 12203 / NCIMB 8253 / ATH 2.4.1.) (Rhodobacter sphaeroides).